Here is an 883-residue protein sequence, read N- to C-terminus: MVDTKTPGDKTLSMPTKTLTLKPRVEQGVVRQSFSHGRSKQVVVEKRGKRRVGGDGPAEPAAAAPEVVKKPTPAPPAVSPRQQPRPSPQQQARSGMVLRTLTEDERSARATALADARVREVEERRLAEIEAQRRAAQELVDKAEREAAEVRRKAEEERHRHEEETKRKAETEAKKRFGEAEPAKKPADGRPASTSTTTTAPRAPVTTTTRPPAVAAEAGDDDEAPRMVRRGPGGGPARPAPPPKQPAAKPGASKQRGRLTLVTALTADDVRERSIASFRRRTQRLKGHASNEPKEKLVREVIVPEAISIQELANRMSERAVDVIRMLMKQGAMHKINDVIDADTAQLIAEELGHTVKRVAASDVEEGLFDVVDNSTDTEPRSPVVTVMGHVDHGKTSLLDALRHANVVSGEAGGITQHIGAYQVTSPETGTKITFIDTPGHAAFTAMRARGAKVTDIVILVVAADDGVMPQTVEAINHAKAAGVPIIVAINKIDKPDAKPERVRTELLQYNVQVESLGGDVVDVEVSAKNKTNLDKLLEMIALQAELLDLKTNESRPAEGTVIEAKLDRGRGPVATVLVQRGTLKVGDIIVAGAEMGRVRALISDQGDNVDFAGPSVPVEVLGFNGPPEAGDRLAVVENEARARQVTSYRAHQKREKAASIVGMRGSLEQMMSQLKTTGRKDFPLIVKADVQGSLEAILGSLEKLGTDEVAARILHAGVGGISESDVTLAEGFSAVILGFSVRANKEAAAAAKRNGIEIRYYNIIYDLVDDVKKAMSGLLAPTLRETMLGNAQILEIFNISKVGKVAGCRVTDGTVERGANVRLIRDNVVVHEGKLSTLKRFKDEVKEVQSGQECGMAFENYTDMRAGDVIECYRVETIQRSL.

Disordered regions lie at residues 1–96 (MVDT…RSGM) and 132–259 (QRRA…RGRL). The span at 57-66 (PAEPAAAAPE) shows a compositional bias: low complexity. The segment covering 72 to 87 (TPAPPAVSPRQQPRPS) has biased composition (pro residues). The segment covering 132–188 (QRRAAQELVDKAEREAAEVRRKAEEERHRHEEETKRKAETEAKKRFGEAEPAKKPAD) has biased composition (basic and acidic residues). Low complexity predominate over residues 191–217 (PASTSTTTTAPRAPVTTTTRPPAVAAE). Residues 380–551 (PRSPVVTVMG…ALQAELLDLK (172 aa)) enclose the tr-type G domain. Residues 389–396 (GHVDHGKT) form a G1 region. A GTP-binding site is contributed by 389–396 (GHVDHGKT). The tract at residues 414–418 (GITQH) is G2. The G3 stretch occupies residues 437–440 (DTPG). GTP contacts are provided by residues 437–441 (DTPGH) and 491–494 (NKID). A G4 region spans residues 491-494 (NKID). The tract at residues 527–529 (SAK) is G5.

The protein belongs to the TRAFAC class translation factor GTPase superfamily. Classic translation factor GTPase family. IF-2 subfamily.

The protein localises to the cytoplasm. Functionally, one of the essential components for the initiation of protein synthesis. Protects formylmethionyl-tRNA from spontaneous hydrolysis and promotes its binding to the 30S ribosomal subunits. Also involved in the hydrolysis of GTP during the formation of the 70S ribosomal complex. The polypeptide is Translation initiation factor IF-2 (Rhodopseudomonas palustris (strain BisB5)).